The sequence spans 427 residues: Enolase (427 aa).

Residue glutamine 162 coordinates (2R)-2-phosphoglycerate. The active-site Proton donor is glutamate 204. Mg(2+)-binding residues include aspartate 241, glutamate 282, and aspartate 309. 4 residues coordinate (2R)-2-phosphoglycerate: lysine 334, arginine 363, serine 364, and lysine 385. Lysine 334 acts as the Proton acceptor in catalysis.

It belongs to the enolase family. Mg(2+) serves as cofactor.

The protein localises to the cytoplasm. It localises to the secreted. Its subcellular location is the cell surface. The enzyme catalyses (2R)-2-phosphoglycerate = phosphoenolpyruvate + H2O. Its pathway is carbohydrate degradation; glycolysis; pyruvate from D-glyceraldehyde 3-phosphate: step 4/5. Catalyzes the reversible conversion of 2-phosphoglycerate (2-PG) into phosphoenolpyruvate (PEP). It is essential for the degradation of carbohydrates via glycolysis. The polypeptide is Enolase (Frankia casuarinae (strain DSM 45818 / CECT 9043 / HFP020203 / CcI3)).